The chain runs to 398 residues: NADH-ubiquinone oxidoreductase 49 kDa subunit (398 aa).

This sequence belongs to the complex I 49 kDa subunit family.

The protein resides in the mitochondrion. It carries out the reaction a ubiquinone + NADH + 5 H(+)(in) = a ubiquinol + NAD(+) + 4 H(+)(out). Its function is as follows. Core subunit of the mitochondrial membrane respiratory chain NADH dehydrogenase (Complex I) that is believed to belong to the minimal assembly required for catalysis. Complex I functions in the transfer of electrons from NADH to the respiratory chain. The immediate electron acceptor for the enzyme is believed to be ubiquinone. Component of the iron-sulfur (IP) fragment of the enzyme. Component of the iron-sulfur (IP) fragment of the enzyme. This Cafeteria roenbergensis (Marine flagellate) protein is NADH-ubiquinone oxidoreductase 49 kDa subunit (NAD7).